Here is a 59-residue protein sequence, read N- to C-terminus: UPF0181 protein YoaH (59 aa).

Belongs to the UPF0181 family.

This chain is UPF0181 protein YoaH, found in Salmonella arizonae (strain ATCC BAA-731 / CDC346-86 / RSK2980).